The primary structure comprises 378 residues: DNA primase small subunit PriS (378 aa).

Active-site residues include aspartate 98, aspartate 100, and aspartate 282.

Belongs to the eukaryotic-type primase small subunit family. As to quaternary structure, heterodimer of a small subunit (PriS) and a large subunit (PriL). It depends on Mg(2+) as a cofactor. Mn(2+) serves as cofactor.

Functionally, catalytic subunit of DNA primase, an RNA polymerase that catalyzes the synthesis of short RNA molecules used as primers for DNA polymerase during DNA replication. The small subunit contains the primase catalytic core and has DNA synthesis activity on its own. Binding to the large subunit stabilizes and modulates the activity, increasing the rate of DNA synthesis while decreasing the length of the DNA fragments, and conferring RNA synthesis capability. The DNA polymerase activity may enable DNA primase to also catalyze primer extension after primer synthesis. May also play a role in DNA repair. In Methanosphaerula palustris (strain ATCC BAA-1556 / DSM 19958 / E1-9c), this protein is DNA primase small subunit PriS.